The following is a 164-amino-acid chain: Lipoprotein signal peptidase (164 aa).

Helical transmembrane passes span 12 to 32 (WLWL…LILQ), 70 to 90 (WFFA…MYRS), and 102 to 122 (ALII…GFVV). Active-site residues include aspartate 123 and aspartate 141. Residues 137-157 (FNLADTAICVGAALIVLEGFL) form a helical membrane-spanning segment.

The protein belongs to the peptidase A8 family.

The protein localises to the cell inner membrane. It carries out the reaction Release of signal peptides from bacterial membrane prolipoproteins. Hydrolyzes -Xaa-Yaa-Zaa-|-(S,diacylglyceryl)Cys-, in which Xaa is hydrophobic (preferably Leu), and Yaa (Ala or Ser) and Zaa (Gly or Ala) have small, neutral side chains.. It participates in protein modification; lipoprotein biosynthesis (signal peptide cleavage). Its function is as follows. This protein specifically catalyzes the removal of signal peptides from prolipoproteins. This is Lipoprotein signal peptidase from Escherichia coli O6:K15:H31 (strain 536 / UPEC).